A 206-amino-acid polypeptide reads, in one-letter code: Translation initiation factor IF-3 (206 aa).

The protein belongs to the IF-3 family. In terms of assembly, monomer.

It localises to the cytoplasm. Functionally, IF-3 binds to the 30S ribosomal subunit and shifts the equilibrium between 70S ribosomes and their 50S and 30S subunits in favor of the free subunits, thus enhancing the availability of 30S subunits on which protein synthesis initiation begins. The polypeptide is Translation initiation factor IF-3 (Shigella flexneri).